A 212-amino-acid polypeptide reads, in one-letter code: uncharacterized protein (212 aa).

A disordered region spans residues 42-101; that stretch reads GITGPKATKSPSRRTTRSPSPSRRTTRSSPSRRTTRSSPSRRTTRSPSPSGRRKQGGPAV. The segment covering 58–91 has biased composition (low complexity); that stretch reads RSPSPSRRTTRSSPSRRTTRSSPSRRTTRSPSPS.

This sequence belongs to the IIV-6 378R family.

This is an uncharacterized protein from Invertebrate iridescent virus 3 (IIV-3).